Consider the following 260-residue polypeptide: Electron transfer flavoprotein subunit beta (260 aa).

This sequence belongs to the ETF beta-subunit/FixA family. In terms of assembly, heterodimer of an alpha and a beta subunit. It depends on FAD as a cofactor. Requires AMP as cofactor.

Functionally, the electron transfer flavoprotein serves as a specific electron acceptor for other dehydrogenases. It transfers the electrons to the main respiratory chain via ETF-ubiquinone oxidoreductase (ETF dehydrogenase). This is Electron transfer flavoprotein subunit beta (etfB) from Thermoanaerobacterium thermosaccharolyticum (strain ATCC 7956 / DSM 571 / NCIMB 9385 / NCA 3814 / NCTC 13789 / WDCM 00135 / 2032) (Clostridium thermosaccharolyticum).